The sequence spans 1097 residues: Cyclin-T (1097 aa).

Disordered regions lie at residues 319 to 782 (SNIT…SNGI), 804 to 936 (LLKP…SLQA), and 985 to 1097 (AAPV…YNKK). Over residues 332 to 350 (DSRDRDRDRERERERERDP) the composition is skewed to basic and acidic residues. 4 stretches are compositionally biased toward low complexity: residues 373–390 (SSSV…SSSS), 420–456 (PSSH…GRPS), 467–478 (GMPPVGVGMPPH), and 489–511 (PQQP…SGMS). Polar residues predominate over residues 580–591 (LPYSQSQSYGHM). A compositionally biased stretch (low complexity) spans 592 to 606 (QQQPVPQSQQQQMPP). Residues 609–620 (SQHSLQSKNSLF) are compositionally biased toward polar residues. The segment covering 652–675 (HDYKLNSHPRDKESPKKERLTPTK) has biased composition (basic and acidic residues). The span at 687-698 (GSGNSSSGSGSS) shows a compositional bias: low complexity. Basic and acidic residues predominate over residues 860–870 (GEIKEESSSKS). Residues 871–883 (EKKKKKDKHKHKE) show a composition bias toward basic residues. Residues 884–895 (KDKSKDKTEKEE) show a composition bias toward basic and acidic residues. At serine 916 the chain carries Phosphoserine. Gly residues predominate over residues 993 to 1007 (GAGGGGYSSSGGSSS). The segment covering 1016–1031 (SDRDRDKESKKNKSQD) has biased composition (basic and acidic residues). Residues 1037–1050 (GAGGGIFNPLGGAG) are compositionally biased toward gly residues. Residues 1087–1097 (APPPMPVYNKK) are compositionally biased toward pro residues.

This sequence belongs to the cyclin family. Cyclin C subfamily. In terms of assembly, component of the super elongation complex (SEC), at least composed of Ell, Cdk9, cyclin-T (CycT), lilli and ear. Associates with CDK9 to form P-TEFb.

The protein resides in the nucleus. Regulatory subunit of the cyclin-dependent kinase pair (CDK9/cyclin T) complex, also called positive transcription elongation factor B (P-TEFb), which is proposed to facilitate the transition from abortive to production elongation by phosphorylating the CTD (carboxy-terminal domain) of the large subunit of RNA polymerase II (RNAP II). This chain is Cyclin-T (CycT), found in Drosophila melanogaster (Fruit fly).